Here is a 515-residue protein sequence, read N- to C-terminus: tRNA-2-methylthio-N(6)-dimethylallyladenosine synthase (515 aa).

One can recognise an MTTase N-terminal domain in the interval 25–140 (KTYQVRTFGC…LPALLNRARH (116 aa)). Cys34, Cys69, Cys103, Cys177, Cys181, and Cys184 together coordinate [4Fe-4S] cluster. A Radical SAM core domain is found at 163-393 (RDSVYAGWVS…TALQDRIAAE (231 aa)). Positions 396 to 466 (AKQLGRKVEV…AFHLVADPAG (71 aa)) constitute a TRAM domain. A disordered region spans residues 482-515 (DRSQADSCGVPAAGAASGKAGVSLGMPSLPTRRA). Residues 490 to 506 (GVPAAGAASGKAGVSLG) are compositionally biased toward low complexity.

Belongs to the methylthiotransferase family. MiaB subfamily. In terms of assembly, monomer. It depends on [4Fe-4S] cluster as a cofactor.

It localises to the cytoplasm. It carries out the reaction N(6)-dimethylallyladenosine(37) in tRNA + (sulfur carrier)-SH + AH2 + 2 S-adenosyl-L-methionine = 2-methylsulfanyl-N(6)-dimethylallyladenosine(37) in tRNA + (sulfur carrier)-H + 5'-deoxyadenosine + L-methionine + A + S-adenosyl-L-homocysteine + 2 H(+). Functionally, catalyzes the methylthiolation of N6-(dimethylallyl)adenosine (i(6)A), leading to the formation of 2-methylthio-N6-(dimethylallyl)adenosine (ms(2)i(6)A) at position 37 in tRNAs that read codons beginning with uridine. This chain is tRNA-2-methylthio-N(6)-dimethylallyladenosine synthase, found in Paenarthrobacter aurescens (strain TC1).